The primary structure comprises 157 residues: Polyferredoxin protein VhcB (157 aa).

4Fe-4S ferredoxin-type domains lie at 23 to 52 (NGIS…VVNP), 62 to 92 (KTER…MGKI), and 100 to 129 (DRIE…LNEE). Cys32, Cys35, Cys38, Cys42, Cys72, Cys75, Cys78, Cys82, Cys109, Cys112, Cys115, Cys119, Cys136, Cys139, Cys142, and Cys146 together coordinate [4Fe-4S] cluster.

The cofactor is [4Fe-4S] cluster.

In Methanococcus voltae, this protein is Polyferredoxin protein VhcB (vhcB).